The chain runs to 463 residues: L-seryl-tRNA(Sec) selenium transferase (463 aa).

An N6-(pyridoxal phosphate)lysine modification is found at lysine 295.

The protein belongs to the SelA family. Homodecamer; pentamer of dimers. Binds only one seryl-tRNA(Sec) per dimer. Pyridoxal 5'-phosphate serves as cofactor.

It is found in the cytoplasm. It carries out the reaction L-seryl-tRNA(Sec) + selenophosphate + H(+) = L-selenocysteinyl-tRNA(Sec) + phosphate. It participates in aminoacyl-tRNA biosynthesis; selenocysteinyl-tRNA(Sec) biosynthesis; selenocysteinyl-tRNA(Sec) from L-seryl-tRNA(Sec) (bacterial route): step 1/1. Functionally, converts seryl-tRNA(Sec) to selenocysteinyl-tRNA(Sec) required for selenoprotein biosynthesis. The chain is L-seryl-tRNA(Sec) selenium transferase from Escherichia coli (strain K12 / MC4100 / BW2952).